The following is a 134-amino-acid chain: MDVFMKGLSMAKEGVVAAAEKTKQGVTEAAEKTKEGVLYVGSKTKEGVVQGVASVAEKTKEQASHLGGAVFSGAGNIAAATGLVKKEEFPTDLKPEEVAQEAAEEPLIEPLMEPEGESYEEQPQEEYQEYEPEA.

Repeat copies occupy residues 20 to 30 (EKTKQGVTEAA) and 31 to 41 (EKTKEGVLYVG). Residues 20–67 (EKTKQGVTEAAEKTKEGVLYVGSKTKEGVVQGVASVAEKTKEQASHLG) form a 4 X 11 AA tandem repeats of [EGS]-K-T-K-[EQ]-[GQ]-V-X(4) region. The 3; approximate repeat unit spans residues 42–56 (SKTKEGVVQGVASVA). Repeat 4 spans residues 57–67 (EKTKEQASHLG). Residues 97-134 (EVAQEAAEEPLIEPLMEPEGESYEEQPQEEYQEYEPEA) are disordered. Residues 98 to 134 (VAQEAAEEPLIEPLMEPEGESYEEQPQEEYQEYEPEA) show a composition bias toward acidic residues. Residue S118 is modified to Phosphoserine; by BARK1, CK2 and GRK5.

The protein belongs to the synuclein family. Phosphorylated. Phosphorylation by G-protein coupled receptor kinases (GRK) is more efficient than phosphorylation by CK1, CK2 and CaM-kinase II. Specifically present in synapses around neurons but not in glial cells.

It localises to the cytoplasm. Its function is as follows. May be involved in neuronal plasticity. This chain is Beta-synuclein (SNCB), found in Bos taurus (Bovine).